Here is a 38-residue protein sequence, read N- to C-terminus: Photosystem II reaction center protein L (38 aa).

Residues 17–37 traverse the membrane as a helical segment; that stretch reads SLYWGLLLIFVLAVPFSNYFF.

Belongs to the PsbL family. As to quaternary structure, PSII is composed of 1 copy each of membrane proteins PsbA, PsbB, PsbC, PsbD, PsbE, PsbF, PsbH, PsbI, PsbJ, PsbK, PsbL, PsbM, PsbT, PsbX, PsbY, PsbZ, Psb30/Ycf12, at least 3 peripheral proteins of the oxygen-evolving complex and a large number of cofactors. It forms dimeric complexes.

The protein resides in the plastid. It is found in the chloroplast thylakoid membrane. Functionally, one of the components of the core complex of photosystem II (PSII). PSII is a light-driven water:plastoquinone oxidoreductase that uses light energy to abstract electrons from H(2)O, generating O(2) and a proton gradient subsequently used for ATP formation. It consists of a core antenna complex that captures photons, and an electron transfer chain that converts photonic excitation into a charge separation. This subunit is found at the monomer-monomer interface and is required for correct PSII assembly and/or dimerization. The sequence is that of Photosystem II reaction center protein L from Pinus thunbergii (Japanese black pine).